We begin with the raw amino-acid sequence, 694 residues long: Putative bifunctional polynucleotide kinase/RNA ligase (694 aa).

The tract at residues 1–385 (MLHVSRLLAN…TKQALNNKLA (385 aa)) is ligase domain. A bifunctional 5'-OH polynucleotide kinase/polynucleotide 3'-phosphatase region spans residues 394–694 (KQLLVLIGIS…FNVCRDYLEF (301 aa)). 401-408 (GISGSGKS) lines the ATP pocket.

The enzyme catalyses a 5'-end dephospho-2'-deoxyribonucleoside-DNA + ATP = a 5'-end 5'-phospho-2'-deoxyribonucleoside-DNA + ADP + H(+). It catalyses the reaction ATP + (ribonucleotide)n-3'-hydroxyl + 5'-phospho-(ribonucleotide)m = (ribonucleotide)n+m + AMP + diphosphate.. Functionally, trifunctional enzyme that possesses a bifunctional polynucleotide kinase/phosphatase activity and an ATP-dependent RNA ligase activity. May therefore play a role to evade an RNA damage-based host response. The sequence is that of Putative bifunctional polynucleotide kinase/RNA ligase (PNK/PNL) from Autographa californica nuclear polyhedrosis virus (AcMNPV).